The chain runs to 183 residues: Glutathione-regulated potassium-efflux system ancillary protein KefG (183 aa).

This sequence belongs to the NAD(P)H dehydrogenase (quinone) family. KefG subfamily. Interacts with KefB.

It localises to the cell inner membrane. It catalyses the reaction a quinone + NADH + H(+) = a quinol + NAD(+). It carries out the reaction a quinone + NADPH + H(+) = a quinol + NADP(+). Regulatory subunit of a potassium efflux system that confers protection against electrophiles. Required for full activity of KefB. The sequence is that of Glutathione-regulated potassium-efflux system ancillary protein KefG from Pectobacterium carotovorum subsp. carotovorum (strain PC1).